Consider the following 183-residue polypeptide: Negative modulator of initiation of replication (183 aa).

Positions 90-91 are interaction with DNA; the sequence is AV.

The protein belongs to the SeqA family. As to quaternary structure, homodimer. Polymerizes to form helical filaments.

It is found in the cytoplasm. In terms of biological role, negative regulator of replication initiation, which contributes to regulation of DNA replication and ensures that replication initiation occurs exactly once per chromosome per cell cycle. Binds to pairs of hemimethylated GATC sequences in the oriC region, thus preventing assembly of replication proteins and re-initiation at newly replicated origins. Repression is relieved when the region becomes fully methylated. The polypeptide is Negative modulator of initiation of replication (Shewanella oneidensis (strain ATCC 700550 / JCM 31522 / CIP 106686 / LMG 19005 / NCIMB 14063 / MR-1)).